A 363-amino-acid polypeptide reads, in one-letter code: S-adenosylmethionine:tRNA ribosyltransferase-isomerase (363 aa).

This sequence belongs to the QueA family. Monomer.

The protein resides in the cytoplasm. It carries out the reaction 7-aminomethyl-7-carbaguanosine(34) in tRNA + S-adenosyl-L-methionine = epoxyqueuosine(34) in tRNA + adenine + L-methionine + 2 H(+). Its pathway is tRNA modification; tRNA-queuosine biosynthesis. In terms of biological role, transfers and isomerizes the ribose moiety from AdoMet to the 7-aminomethyl group of 7-deazaguanine (preQ1-tRNA) to give epoxyqueuosine (oQ-tRNA). This Haemophilus influenzae (strain PittEE) protein is S-adenosylmethionine:tRNA ribosyltransferase-isomerase.